The sequence spans 223 residues: N-terminal Xaa-Pro-Lys N-methyltransferase 1 (223 aa).

Met1 carries the N-acetylmethionine modification. Residue Thr2 is modified to N-acetylthreonine; in N-terminal Xaa-Pro-Lys N-methyltransferase 1, N-terminally processed. S-adenosyl-L-methionine-binding positions include Gly69, Arg74, 91 to 93 (DVT), 119 to 120 (LQ), and Gln135.

Belongs to the methyltransferase superfamily. NTM1 family.

It is found in the nucleus. The catalysed reaction is N-terminal L-alanyl-L-prolyl-L-lysyl-[protein] + 3 S-adenosyl-L-methionine = N-terminal N,N,N-trimethyl-L-alanyl-L-prolyl-L-lysyl-[protein] + 3 S-adenosyl-L-homocysteine + 3 H(+). It carries out the reaction N-terminal L-seryl-L-prolyl-L-lysyl-[protein] + 3 S-adenosyl-L-methionine = N-terminal N,N,N-trimethyl-L-seryl-L-prolyl-L-lysyl-[protein] + 3 S-adenosyl-L-homocysteine + 3 H(+). It catalyses the reaction N-terminal L-prolyl-L-prolyl-L-lysyl-[protein] + 2 S-adenosyl-L-methionine = N-terminal N,N-dimethyl-L-prolyl-L-prolyl-L-lysyl-[protein] + 2 S-adenosyl-L-homocysteine + 2 H(+). In terms of biological role, distributive alpha-N-methyltransferase that methylates the N-terminus of target proteins containing the N-terminal motif [Ala/Gly/Pro/Ser]-Pro-Lys when the initiator Met is cleaved. Specifically catalyzes mono-, di- or tri-methylation of the exposed alpha-amino group of the Ala, Gly or Ser residue in the [Ala/Gly/Ser]-Pro-Lys motif and mono- or di-methylation of Pro in the Pro-Pro-Lys motif. Some of the substrates may be primed by NTMT2-mediated monomethylation. Catalyzes the trimethylation of the N-terminal Gly in CENPA (after removal of Met-1). Responsible for the N-terminal methylation of KLHL31, MYL2, MYL3, RB1, RCC1, RPL23A and SET. Required during mitosis for normal bipolar spindle formation and chromosome segregation via its action on RCC1. The sequence is that of N-terminal Xaa-Pro-Lys N-methyltransferase 1 (NTMT1) from Ailuropoda melanoleuca (Giant panda).